A 130-amino-acid chain; its full sequence is WAP four-disulfide core domain protein 3 (130 aa).

Residues Met1–Ala16 form the signal peptide. WAP domains follow at residues Gly17–Ile61 and Glu62–Leu106. 8 disulfides stabilise this stretch: Cys25/Cys49, Cys32/Cys53, Cys36/Cys48, Cys42/Cys57, Cys69/Cys94, Cys77/Cys98, Cys81/Cys93, and Cys87/Cys102. Asn116 carries an N-linked (GlcNAc...) asparagine glycan.

Its subcellular location is the secreted. This is WAP four-disulfide core domain protein 3 (Wfdc3) from Mus musculus (Mouse).